We begin with the raw amino-acid sequence, 274 residues long: Cytochrome b-c1 complex subunit Rieske, mitochondrial (274 aa).

Residues 79–103 (SHTDIKVPDFSDYRRPEVLDSTKSS) are Mitochondrial matrix-facing. Residues 104–140 (KESSEARKGFSYLVTATTTVGVAYAAKNVVSQFVSSM) traverse the membrane as a helical segment. Residues 141–274 (SASADVLAMS…FTSDDMVIVG (134 aa)) are Mitochondrial intermembrane-facing. The 86-residue stretch at 187–272 (EAAVEVSQLR…YEFTSDDMVI (86 aa)) folds into the Rieske domain. [2Fe-2S] cluster is bound by residues Cys217, His219, Cys236, His239, and Ser241. Cys222 and Cys238 are oxidised to a cystine.

Belongs to the Rieske iron-sulfur protein family. In terms of assembly, component of the ubiquinol-cytochrome c oxidoreductase (cytochrome b-c1 complex, complex III, CIII), a multisubunit enzyme composed of 11 subunits. The complex is composed of 3 respiratory subunits cytochrome b, cytochrome c1 and Rieske protein UQCRFS1, 2 core protein subunits UQCRC1/QCR1 and UQCRC2/QCR2, and 6 low-molecular weight protein subunits UQCRH/QCR6, UQCRB/QCR7, UQCRQ/QCR8, UQCR10/QCR9, UQCR11/QCR10 and subunit 9, the cleavage product of Rieske protein UQCRFS1. The complex exists as an obligatory dimer and forms supercomplexes (SCs) in the inner mitochondrial membrane with NADH-ubiquinone oxidoreductase (complex I, CI) and cytochrome c oxidase (complex IV, CIV), resulting in different assemblies (supercomplex SCI(1)III(2)IV(1) and megacomplex MCI(2)III(2)IV(2)). Incorporation of the Rieske protein UQCRFS1 is the penultimate step in complex III assembly. Interacts with TTC19, which is involved in the clearance of UQCRFS1 fragments. Component of the ubiquinol-cytochrome c oxidoreductase (cytochrome b-c1 complex, complex III, CIII). Subunit 9 corresponds to the mitochondrial targeting sequence (MTS) of Rieske protein UQCRFS1. It is retained after processing and incorporated inside complex III, where it remains bound to the complex and localizes between the 2 core subunits UQCRC1/QCR1 and UQCRC2/QCR2. Requires [2Fe-2S] cluster as cofactor. In terms of processing, proteolytic processing is necessary for the correct insertion of UQCRFS1 in the complex III dimer. Several fragments are generated during UQCRFS1 insertion, most probably due to the endogenous matrix-processing peptidase (MPP) activity of the 2 core protein subunits UQCRC1/QCR1 and UQCRC2/QCR2, which are homologous to the 2 mitochondrial-processing peptidase (MPP) subunits beta-MPP and alpha-MPP respectively. The action of the protease is also necessary for the clearance of the UQCRFS1 fragments.

Its subcellular location is the mitochondrion inner membrane. It catalyses the reaction a quinol + 2 Fe(III)-[cytochrome c](out) = a quinone + 2 Fe(II)-[cytochrome c](out) + 2 H(+)(out). Component of the ubiquinol-cytochrome c oxidoreductase, a multisubunit transmembrane complex that is part of the mitochondrial electron transport chain which drives oxidative phosphorylation. The respiratory chain contains 3 multisubunit complexes succinate dehydrogenase (complex II, CII), ubiquinol-cytochrome c oxidoreductase (cytochrome b-c1 complex, complex III, CIII) and cytochrome c oxidase (complex IV, CIV), that cooperate to transfer electrons derived from NADH and succinate to molecular oxygen, creating an electrochemical gradient over the inner membrane that drives transmembrane transport and the ATP synthase. The cytochrome b-c1 complex catalyzes electron transfer from ubiquinol to cytochrome c, linking this redox reaction to translocation of protons across the mitochondrial inner membrane, with protons being carried across the membrane as hydrogens on the quinol. In the process called Q cycle, 2 protons are consumed from the matrix, 4 protons are released into the intermembrane space and 2 electrons are passed to cytochrome c. The Rieske protein is a catalytic core subunit containing a [2Fe-2S] iron-sulfur cluster. It cycles between 2 conformational states during catalysis to transfer electrons from the quinol bound in the Q(0) site in cytochrome b to cytochrome c1. Incorporation of UQCRFS1 is the penultimate step in complex III assembly. Its function is as follows. Component of the ubiquinol-cytochrome c oxidoreductase (cytochrome b-c1 complex, complex III, CIII). UQCRFS1 undergoes proteolytic processing once it is incorporated in the complex III dimer. One of the fragments, called subunit 9, corresponds to its mitochondrial targeting sequence (MTS). The proteolytic processing is necessary for the correct insertion of UQCRFS1 in the complex III dimer, but the persistence of UQCRFS1-derived fragments may prevent newly imported UQCRFS1 to be processed and assembled into complex III and is detrimental for the complex III structure and function. The chain is Cytochrome b-c1 complex subunit Rieske, mitochondrial (UQCRFS1) from Bos taurus (Bovine).